A 66-amino-acid polypeptide reads, in one-letter code: Protein I177L (66 aa).

Belongs to the asfivirus I177L family.

The protein resides in the virion. In Ornithodoros (relapsing fever ticks), this protein is Protein I177L.